Reading from the N-terminus, the 444-residue chain is 23S rRNA (uracil(1939)-C(5))-methyltransferase RlmD (444 aa).

The TRAM domain maps to 5–67; sequence RSRIDRTPFQ…RHFDEARTVE (63 aa). Cysteine 80, cysteine 86, cysteine 89, and cysteine 168 together coordinate [4Fe-4S] cluster. Residues glutamine 276, phenylalanine 305, asparagine 310, glutamate 326, aspartate 353, and aspartate 374 each contribute to the S-adenosyl-L-methionine site. Cysteine 400 acts as the Nucleophile in catalysis.

It belongs to the class I-like SAM-binding methyltransferase superfamily. RNA M5U methyltransferase family. RlmD subfamily.

It carries out the reaction uridine(1939) in 23S rRNA + S-adenosyl-L-methionine = 5-methyluridine(1939) in 23S rRNA + S-adenosyl-L-homocysteine + H(+). Catalyzes the formation of 5-methyl-uridine at position 1939 (m5U1939) in 23S rRNA. The protein is 23S rRNA (uracil(1939)-C(5))-methyltransferase RlmD of Stenotrophomonas maltophilia (strain K279a).